Reading from the N-terminus, the 142-residue chain is Large ribosomal subunit protein uL22c (142 aa).

Belongs to the universal ribosomal protein uL22 family. Part of the 50S ribosomal subunit.

The protein resides in the plastid. The protein localises to the chloroplast. In terms of biological role, this protein binds specifically to 23S rRNA. Its function is as follows. The globular domain of the protein is located near the polypeptide exit tunnel on the outside of the subunit, while an extended beta-hairpin is found that lines the wall of the exit tunnel in the center of the 70S ribosome. In Carica papaya (Papaya), this protein is Large ribosomal subunit protein uL22c (rpl22).